The primary structure comprises 658 residues: Probable mitochondrial Rho GTPase gemA (658 aa).

Residues 1–633 (MKNNIKVILI…NGSNGSNNSN (633 aa)) are Cytoplasmic-facing. A Miro 1 domain is found at 2 to 175 (KNNIKVILIG…LYASQTSVFF (174 aa)). GTP-binding positions include 11 to 18 (GDEQVGKS), 57 to 62 (DTFDDG), and 118 to 121 (NKLD). EF-hand domains follow at residues 191 to 226 (GCERALKRIFKLCDHDNDGSLSEEEINYFQTKCGHE) and 311 to 346 (MGNEFFKSLFEKYDSDSDGVLSSFDLVSLFSTTPKI). Residues Asp204, Asp206, Asp208, Ser210, Glu215, Asp324, Asp326, Asp328, and Asp335 each contribute to the Ca(2+) site. The 197-residue stretch at 420–616 (RNIVNCYVFG…YHEMMETIVN (197 aa)) folds into the Miro 2 domain. Residues 429–436 (GAEAVGKT), 466–468 (LLK), and 530–533 (TKNN) each bind GTP. The tract at residues 532 to 575 (NNNNNNNNNNNNNNNNNNNNLNNNNNNINNNNNNNNNNTTTTNA) is disordered. A helical; Anchor for type IV membrane protein membrane pass occupies residues 634-656 (ILTYLVIAAGVAGVGLLLSKYLA). Residues 657-658 (KK) are Mitochondrial intermembrane-facing.

It belongs to the mitochondrial Rho GTPase family.

It localises to the mitochondrion outer membrane. Its function is as follows. Mitochondrial GTPase involved in mitochondrial trafficking. Probably involved in control of anterograde transport of mitochondria and their subcellular distribution. The protein is Probable mitochondrial Rho GTPase gemA (gemA) of Dictyostelium discoideum (Social amoeba).